The sequence spans 635 residues: Early transcription factor 70 kDa subunit (635 aa).

Positions 32-185 (RSILDENNSV…SNIISIMSDE (154 aa)) constitute a Helicase ATP-binding domain. 45 to 52 (HIMGSGKT) provides a ligand contact to ATP. The short motif at 135–138 (DEAH) is the DEXH box element.

It belongs to the helicase family. VETF subfamily. As to quaternary structure, heterodimer of a 70 kDa and a 82 kDa subunit. Part of the early transcription complex composed of ETF, RAP94, and the DNA-directed RNA polymerase.

It localises to the virion. Its function is as follows. Acts with RNA polymerase to initiate transcription from early gene promoters. Is recruited by the RPO-associated protein of 94 kDa (RAP94) to form the early transcription complex, which also contains the core RNA polymerase. ETF heterodimer binds to early gene promoters. The sequence is that of Early transcription factor 70 kDa subunit (VETFS) from Homo sapiens (Human).